Consider the following 70-residue polypeptide: Homeobox protein OTX2 (70 aa).

Residues 34-70 (HQLPGPGATLSPMGTNAVTSHLNQSPASLSTQGYGAS) are disordered. Over residues 45–70 (PMGTNAVTSHLNQSPASLSTQGYGAS) the composition is skewed to polar residues.

This sequence belongs to the paired homeobox family. Bicoid subfamily.

The protein localises to the nucleus. Transcription factor probably involved in the development of the brain and the sense organs. Can bind to the bicoid/BCD target sequence (BTS): 5'-TCTAATCCC-3'. The chain is Homeobox protein OTX2 (Otx2) from Rattus norvegicus (Rat).